Consider the following 138-residue polypeptide: Mediator of RNA polymerase II transcription subunit 22 (138 aa).

The stretch at 13 to 40 (LKSYNSRLKEDIRSMRENFEEIIRLAKG) forms a coiled coil.

It belongs to the Mediator complex subunit 22 family. As to quaternary structure, component of the Mediator complex.

It is found in the nucleus. Component of the Mediator complex, a coactivator involved in the regulated transcription of nearly all RNA polymerase II-dependent genes. Mediator functions as a bridge to convey information from gene-specific regulatory proteins to the basal RNA polymerase II transcription machinery. Mediator is recruited to promoters by direct interactions with regulatory proteins and serves as a scaffold for the assembly of a functional preinitiation complex with RNA polymerase II and the general transcription factors. This Anopheles gambiae (African malaria mosquito) protein is Mediator of RNA polymerase II transcription subunit 22 (MED22).